Here is a 416-residue protein sequence, read N- to C-terminus: TNF receptor-associated factor 1 (416 aa).

Residues 1-24 (MASSSGSSPRPAPDENEFPFGCPP) are disordered. Residue serine 146 is modified to Phosphoserine. Positions 182 to 264 (MKEKLLAELE…QSLRLMEEAS (83 aa)) form a coiled coil. Glycyl lysine isopeptide (Lys-Gly) (interchain with G-Cter in ubiquitin) cross-links involve residues lysine 185 and lysine 193. Positions 266–412 (DGTFLWKITN…DDTMFLKCIV (147 aa)) constitute an MATH domain.

Homotrimer. Heterotrimer with TRAF2. Interacts with TNFRSF1A/TNFR1, TNFRSF1B/TNFR2, TNFRSF4, TNFRSF5/CD40, TNFRSF8/CD30, TNFRSF9/CD137, TNFRSF11A/RANK, TNFRSF13C, TNFRSF18/AITR, TNFRSF17/BCMA, TNFRSF19/TROY, TNFRSF19L/RELT, XEDAR, EDAR, Epstein-Barr virus BNFL1/LMP-1, TANK/ITRAF, TRAIP and RIPK2. Interacts with BIRC2 and BIRC3 N-terminus; a single BIRC2 or BIRC3 molecule interacts with a heterotrimer formed by TRAF1 and TRAF2. Interacts with NFATC2IP, TRAFD1 and with HIVEP3. Interacts with MAP3K14. Interacts with GPS2. In terms of processing, polyubiquitinated by BIRC2 and/or BIRC3, leading to its subsequent proteasomal degradation. Ubiquitinated by the SCF(FBXL2) complex, leading to its degradation by the proteasome.

Adapter molecule that regulates the activation of NF-kappa-B and JNK. Plays a role in the regulation of cell survival and apoptosis. The heterotrimer formed by TRAF1 and TRAF2 is part of a E3 ubiquitin-protein ligase complex that promotes ubiquitination of target proteins, such as MAP3K14. The TRAF1/TRAF2 complex recruits the antiapoptotic E3 protein-ubiquitin ligases BIRC2 and BIRC3 to TNFRSF1B/TNFR2. This is TNF receptor-associated factor 1 (TRAF1) from Homo sapiens (Human).